Reading from the N-terminus, the 466-residue chain is 3-isopropylmalate dehydratase large subunit (466 aa).

3 residues coordinate [4Fe-4S] cluster: Cys-347, Cys-407, and Cys-410.

This sequence belongs to the aconitase/IPM isomerase family. LeuC type 1 subfamily. As to quaternary structure, heterodimer of LeuC and LeuD. Requires [4Fe-4S] cluster as cofactor.

The enzyme catalyses (2R,3S)-3-isopropylmalate = (2S)-2-isopropylmalate. It participates in amino-acid biosynthesis; L-leucine biosynthesis; L-leucine from 3-methyl-2-oxobutanoate: step 2/4. Catalyzes the isomerization between 2-isopropylmalate and 3-isopropylmalate, via the formation of 2-isopropylmaleate. In Shigella dysenteriae serotype 1 (strain Sd197), this protein is 3-isopropylmalate dehydratase large subunit.